An 85-amino-acid polypeptide reads, in one-letter code: Large ribosomal subunit protein bL27 (85 aa).

Residues 1–10 show a composition bias toward gly residues; sequence MAQKKGGGST. The disordered stretch occupies residues 1–20; sequence MAQKKGGGSTRNGRDSKPKM.

It belongs to the bacterial ribosomal protein bL27 family.

In Delftia acidovorans (strain DSM 14801 / SPH-1), this protein is Large ribosomal subunit protein bL27.